We begin with the raw amino-acid sequence, 286 residues long: Homeobox-leucine zipper protein ATHB-20 (286 aa).

The segment at residues 84–143 (LGEKKKRLQLEQVKALEKSFELGNKLEPERKIQLAKALGMQPRQIAIWFQNRRARWKTRQ) is a DNA-binding region (homeobox). Residues 144-179 (LERDYDSLKKQFESLKSDNASLLAYNKKLLAEVMAL) form a leucine-zipper region.

Belongs to the HD-ZIP homeobox family. Class I subfamily. Widely expressed.

It localises to the nucleus. Its function is as follows. Probable transcription factor. The polypeptide is Homeobox-leucine zipper protein ATHB-20 (ATHB-20) (Arabidopsis thaliana (Mouse-ear cress)).